Reading from the N-terminus, the 359-residue chain is Opine dehydrogenase (359 aa).

The protein belongs to the lysopine/nopaline/octopine/opine/vitopine dehydrogenases family. As to quaternary structure, homodimer.

It carries out the reaction (2S)-2-[(R)-1-carboxyethylamino]pentanoate + NAD(+) + H2O = L-2-aminopentanoate + pyruvate + NADH + H(+). Its function is as follows. In the forward direction also acts on secondary amine dicarboxylates such as N-(1-carboxyethyl)methionine and N-(1-carboxyethyl)phenylalanine. In the reverse direction, the enzyme also acts on neutral amino acids as an amino donor. They include L-amino acids such as 2-aminopentanoic acid, 2-aminobutyric acid, 2-aminohexanoic acid, 3-chloroalanine, O-acetylserine, methionine, isoleucine, valine, phenylalanine, leucine and alanine. The protein is Opine dehydrogenase (odh) of Arthrobacter sp. (strain 1C).